The primary structure comprises 349 residues: Glycosyltransferase 8 domain-containing protein 2 (349 aa).

At M1 to K6 the chain is on the cytoplasmic side. Residues V7–Y24 traverse the membrane as a helical; Signal-anchor for type II membrane protein segment. The Lumenal segment spans residues K25–R349. N-linked (GlcNAc...) asparagine glycosylation occurs at N234.

It belongs to the glycosyltransferase 8 family.

It is found in the membrane. This chain is Glycosyltransferase 8 domain-containing protein 2 (Glt8d2), found in Mus musculus (Mouse).